Reading from the N-terminus, the 329-residue chain is GTP 3',8-cyclase (329 aa).

In terms of domain architecture, Radical SAM core spans 8–234; the sequence is AFARKFYYLR…QLRSRADGPA (227 aa). Arg17 contacts GTP. 2 residues coordinate [4Fe-4S] cluster: Cys24 and Cys28. Tyr30 contributes to the S-adenosyl-L-methionine binding site. Residue Cys31 participates in [4Fe-4S] cluster binding. Arg68 provides a ligand contact to GTP. Gly72 serves as a coordination point for S-adenosyl-L-methionine. Thr99 contacts GTP. Position 123 (Ser123) interacts with S-adenosyl-L-methionine. GTP is bound at residue Lys160. Met194 lines the S-adenosyl-L-methionine pocket. [4Fe-4S] cluster is bound by residues Cys257 and Cys260. Position 262-264 (262-264) interacts with GTP; sequence RLR. Cys274 provides a ligand contact to [4Fe-4S] cluster.

This sequence belongs to the radical SAM superfamily. MoaA family. Monomer and homodimer. It depends on [4Fe-4S] cluster as a cofactor.

The enzyme catalyses GTP + AH2 + S-adenosyl-L-methionine = (8S)-3',8-cyclo-7,8-dihydroguanosine 5'-triphosphate + 5'-deoxyadenosine + L-methionine + A + H(+). It participates in cofactor biosynthesis; molybdopterin biosynthesis. Its function is as follows. Catalyzes the cyclization of GTP to (8S)-3',8-cyclo-7,8-dihydroguanosine 5'-triphosphate. The sequence is that of GTP 3',8-cyclase from Cronobacter sakazakii (strain ATCC BAA-894) (Enterobacter sakazakii).